A 121-amino-acid polypeptide reads, in one-letter code: uncharacterized protein (121 aa).

Positions 9-77 (KPIYLQIADQ…RGQGTFIAEK (69 aa)) constitute an HTH gntR-type domain. Positions 37 to 56 (VREMAIQTKVNPNTIQRTYS) form a DNA-binding region, H-T-H motif.

This is an uncharacterized protein from Bacillus subtilis (strain 168).